The following is a 327-amino-acid chain: tRNA dimethylallyltransferase (327 aa).

14-21 contributes to the ATP binding site; the sequence is GPTASGKT. 16 to 21 is a substrate binding site; it reads TASGKT. Interaction with substrate tRNA stretches follow at residues 39-42 and 163-167; these read DSAL and QRIQR.

This sequence belongs to the IPP transferase family. Monomer. Requires Mg(2+) as cofactor.

The catalysed reaction is adenosine(37) in tRNA + dimethylallyl diphosphate = N(6)-dimethylallyladenosine(37) in tRNA + diphosphate. Functionally, catalyzes the transfer of a dimethylallyl group onto the adenine at position 37 in tRNAs that read codons beginning with uridine, leading to the formation of N6-(dimethylallyl)adenosine (i(6)A). This is tRNA dimethylallyltransferase from Xanthomonas oryzae pv. oryzae (strain PXO99A).